The sequence spans 101 residues: NADH-quinone oxidoreductase subunit K (101 aa).

The next 3 helical transmembrane spans lie at 4-24 (LAHYLVLGAILFAISIVGIFL), 30-50 (IIILMAIELMLLAVNTNFVAF), and 61-81 (IFVFFVLTVAAAEAAIGLAIL).

The protein belongs to the complex I subunit 4L family. In terms of assembly, NDH-1 is composed of 14 different subunits. Subunits NuoA, H, J, K, L, M, N constitute the membrane sector of the complex.

It is found in the cell inner membrane. It carries out the reaction a quinone + NADH + 5 H(+)(in) = a quinol + NAD(+) + 4 H(+)(out). Its function is as follows. NDH-1 shuttles electrons from NADH, via FMN and iron-sulfur (Fe-S) centers, to quinones in the respiratory chain. The immediate electron acceptor for the enzyme in this species is believed to be ubiquinone. Couples the redox reaction to proton translocation (for every two electrons transferred, four hydrogen ions are translocated across the cytoplasmic membrane), and thus conserves the redox energy in a proton gradient. In Paraburkholderia phymatum (strain DSM 17167 / CIP 108236 / LMG 21445 / STM815) (Burkholderia phymatum), this protein is NADH-quinone oxidoreductase subunit K.